The chain runs to 212 residues: ATP synthase F(0) complex subunit a (212 aa).

6 helical membrane passes run 3–23, 58–78, 87–107, 128–148, 154–174, and 179–199; these read MMGI…MFTS, WAAM…LGLL, QLSM…LTGL, IPLL…ALGV, LTAG…LMPT, and ALST…VAMI.

It belongs to the ATPase A chain family. Component of the ATP synthase complex composed at least of ATP5F1A/subunit alpha, ATP5F1B/subunit beta, ATP5MC1/subunit c (homooctomer), MT-ATP6/subunit a, MT-ATP8/subunit 8, ATP5ME/subunit e, ATP5MF/subunit f, ATP5MG/subunit g, ATP5MK/subunit k, ATP5MJ/subunit j, ATP5F1C/subunit gamma, ATP5F1D/subunit delta, ATP5F1E/subunit epsilon, ATP5PF/subunit F6, ATP5PB/subunit b, ATP5PD/subunit d, ATP5PO/subunit OSCP. ATP synthase complex consists of a soluble F(1) head domain (subunits alpha(3) and beta(3)) - the catalytic core - and a membrane F(0) domain - the membrane proton channel (subunits c, a, 8, e, f, g, k and j). These two domains are linked by a central stalk (subunits gamma, delta, and epsilon) rotating inside the F1 region and a stationary peripheral stalk (subunits F6, b, d, and OSCP). Interacts with DNAJC30; interaction is direct.

The protein resides in the mitochondrion inner membrane. It carries out the reaction H(+)(in) = H(+)(out). Subunit a, of the mitochondrial membrane ATP synthase complex (F(1)F(0) ATP synthase or Complex V) that produces ATP from ADP in the presence of a proton gradient across the membrane which is generated by electron transport complexes of the respiratory chain. ATP synthase complex consist of a soluble F(1) head domain - the catalytic core - and a membrane F(1) domain - the membrane proton channel. These two domains are linked by a central stalk rotating inside the F(1) region and a stationary peripheral stalk. During catalysis, ATP synthesis in the catalytic domain of F(1) is coupled via a rotary mechanism of the central stalk subunits to proton translocation. With the subunit c (ATP5MC1), forms the proton-conducting channel in the F(0) domain, that contains two crucial half-channels (inlet and outlet) that facilitate proton movement from the mitochondrial intermembrane space (IMS) into the matrix. Protons are taken up via the inlet half-channel and released through the outlet half-channel, following a Grotthuss mechanism. This Tropidurus montanus (Lizard) protein is ATP synthase F(0) complex subunit a.